A 205-amino-acid chain; its full sequence is HTH-type transcriptional regulator LuxR (205 aa).

The 61-residue stretch at 15–75 (LKRKQQLMEI…EVLNHVVRQF (61 aa)) folds into the HTH tetR-type domain. Residues 39-58 (HADIAEIAQVSVATVFNYFP) constitute a DNA-binding region (H-T-H motif).

Its function is as follows. Regulatory protein of bacterial bioluminescence. It probably binds the autoinducer molecule and potentiates the transcription of the bioluminescence operon. The chain is HTH-type transcriptional regulator LuxR (luxR) from Vibrio harveyi (Beneckea harveyi).